The chain runs to 319 residues: Cytochrome c biogenesis protein CcsA (319 aa).

The next 7 helical transmembrane spans lie at 9–29 (ILTH…LITL), 44–64 (GMIV…ASSG), 68–88 (LSNL…LHTI), 143–163 (MLLS…ILII), 223–243 (VISL…VWAN), 257–271 (TWAF…IYLH), and 286–306 (VASI…LLGI).

The protein belongs to the CcmF/CycK/Ccl1/NrfE/CcsA family. May interact with Ccs1.

Its subcellular location is the plastid. The protein resides in the chloroplast thylakoid membrane. Functionally, required during biogenesis of c-type cytochromes (cytochrome c6 and cytochrome f) at the step of heme attachment. The sequence is that of Cytochrome c biogenesis protein CcsA from Agrostis stolonifera (Creeping bentgrass).